The primary structure comprises 183 residues: Large ribosomal subunit protein uL6 (183 aa).

It belongs to the universal ribosomal protein uL6 family. In terms of assembly, part of the 50S ribosomal subunit.

Its function is as follows. This protein binds to the 23S rRNA, and is important in its secondary structure. It is located near the subunit interface in the base of the L7/L12 stalk, and near the tRNA binding site of the peptidyltransferase center. The chain is Large ribosomal subunit protein uL6 from Mycoplasmoides gallisepticum (strain R(low / passage 15 / clone 2)) (Mycoplasma gallisepticum).